The primary structure comprises 887 residues: Exosome complex component 10 (887 aa).

The segment covering 1–10 has biased composition (basic and acidic residues); the sequence is MAPPSPREHQ. The disordered stretch occupies residues 1 to 23; sequence MAPPSPREHQSAPATSATKPDAE. A Glycyl lysine isopeptide (Lys-Gly) (interchain with G-Cter in SUMO2) cross-link involves residue K19. The region spanning 289-455 is the 3'-5' exonuclease domain; that stretch reads HLVSSLDELV…YIYDRMRLEL (167 aa). 4 residues coordinate Mg(2+): D313, E315, D371, and D440. One can recognise an HRDC domain in the interval 503–583; that stretch reads NSQQLTAFQL…QQAREMPLLK (81 aa). Residue K583 forms a Glycyl lysine isopeptide (Lys-Gly) (interchain with G-Cter in SUMO1); alternate linkage. Residue K583 forms a Glycyl lysine isopeptide (Lys-Gly) (interchain with G-Cter in SUMO2); alternate linkage. K710 is covalently cross-linked (Glycyl lysine isopeptide (Lys-Gly) (interchain with G-Cter in SUMO2)). Disordered regions lie at residues 734 to 757 and 777 to 887; these read KEPKEATKKKVAEQTAAREEAKEE and NATK…WPKR. Residues 778–796 are compositionally biased toward basic and acidic residues; sequence ATKKRERATSDLRTIEQKQ. S823 bears the Phosphoserine mark. Glycyl lysine isopeptide (Lys-Gly) (interchain with G-Cter in SUMO2) cross-links involve residues K835, K861, and K875.

It belongs to the exosome component 10/RRP6 family. Component of the RNA exosome complex. The catalytically inactive RNA exosome core complex (Exo-9) associates with the catalytic subunit EXOSC10/RRP6 (via its N-terminus). Exo-9 may associate with DIS3 to form the nucleolar exosome complex, or DIS3L to form the cytoplasmic exosome complex. The RNA exosome complex interacts with cofactors C1D/RRP47, MPHOSPH6/MPP6 and MTREX/MTR4. Interacts with MTREX; the interaction with MTREX mediates the association of MTREX with nuclear RNA exosomes. Part of the small subunit (SSU) processome, composed of more than 70 proteins and the RNA chaperone small nucleolar RNA (snoRNA) U3. Interacts with ALYREF/THOC4. Interacts with DHX36; this interaction occurs in a RNase-insensitive manner. Interacts with NRDE2. Interacts (via C-terminus) with USP36 (via C-terminus); the interaction is facilitated by the association with RNA and promotes sumoylation of EXOSC10. The cofactor is Mg(2+). Post-translationally, sumoylated by USP36; sumoylation does not significantly affect EXOSC10 nucleolar localization and association with core exosome and USP36, but regulates the nucleolar RNA exosome activity in rRNA processing by promoting binding of EXOSC10 to pre-rRNAs. Effects of sumoylation on EXOSC10 levels vary between different studies. Sumoylation of EXOSC10 is required for the modulation of EXOSC10 effects on cellular protein translation and cell proliferation. Sumoylation is promoted by mild hypothermia. As to expression, expressed in ovary (at protein level). Expressed in testis (at protein level). Expressed in lung (at protein level).

The protein resides in the cytoplasm. It is found in the nucleus. It localises to the nucleolus. The protein localises to the nucleoplasm. Its function is as follows. Catalytic component of the RNA exosome complex which has 3'-&gt;5' exoribonuclease activity and participates in a multitude of cellular RNA processing and degradation events. In the nucleus, the RNA exosome complex is involved in proper maturation of stable RNA species such as rRNA, snRNA and snoRNA, in the elimination of RNA processing by-products and non-coding 'pervasive' transcripts, such as antisense RNA species and promoter-upstream transcripts (PROMPTs), and of mRNAs with processing defects, thereby limiting or excluding their export to the cytoplasm. Part of the small subunit (SSU) processome, first precursor of the small eukaryotic ribosomal subunit. During the assembly of the SSU processome in the nucleolus, many ribosome biogenesis factors, an RNA chaperone and ribosomal proteins associate with the nascent pre-rRNA and work in concert to generate RNA folding, modifications, rearrangements and cleavage as well as targeted degradation of pre-ribosomal RNA by the RNA exosome. The RNA exosome may be involved in Ig class switch recombination (CSR) and/or Ig variable region somatic hypermutation (SHM) by targeting AICDA deamination activity to transcribed dsDNA substrates. In the cytoplasm, the RNA exosome complex is involved in general mRNA turnover and specifically degrades inherently unstable mRNAs containing AU-rich elements (AREs) within their 3' untranslated regions, and in RNA surveillance pathways, preventing translation of aberrant mRNAs. It seems to be involved in degradation of histone mRNA. EXOSC10 is required for nucleolar localization of C1D and probably mediates the association of MTREX, C1D and MPHOSPH6 with the RNA exosome involved in the maturation of 5.8S rRNA. Plays a role in the recruitment of replication protein A complex (RPA) and RAD51 to DNA double-strand breaks caused by irradiation, contributing to DNA repair by homologous recombination. Regulates levels of damage-induced RNAs in order to prevent DNA-RNA hybrid formation at DNA double-strand breaks and limit DNA end resection after damage. Plays a role in oocyte development, maturation and survival. Required for normal testis development and mitotic division of spermatogonia. Plays a role in proper embryo development. Required for global protein translation. Required for cell proliferation. The polypeptide is Exosome complex component 10 (Exosc10) (Mus musculus (Mouse)).